Here is a 168-residue protein sequence, read N- to C-terminus: Photosystem I assembly protein Ycf3 (168 aa).

TPR repeat units follow at residues 35 to 68, 72 to 105, and 120 to 153; these read AFTY…EIDP, SYIL…NPFL, and GEQA…TPGN.

It belongs to the Ycf3 family.

The protein resides in the plastid. The protein localises to the chloroplast thylakoid membrane. In terms of biological role, essential for the assembly of the photosystem I (PSI) complex. May act as a chaperone-like factor to guide the assembly of the PSI subunits. The sequence is that of Photosystem I assembly protein Ycf3 from Chloranthus spicatus (Chulantree).